Reading from the N-terminus, the 190-residue chain is Xanthine phosphoribosyltransferase (190 aa).

Leucine 20 and asparagine 27 together coordinate xanthine. 128–132 (ANGKA) contacts 5-phospho-alpha-D-ribose 1-diphosphate. Lysine 156 contacts xanthine.

Belongs to the purine/pyrimidine phosphoribosyltransferase family. Xpt subfamily. In terms of assembly, homodimer.

The protein localises to the cytoplasm. It carries out the reaction XMP + diphosphate = xanthine + 5-phospho-alpha-D-ribose 1-diphosphate. It participates in purine metabolism; XMP biosynthesis via salvage pathway; XMP from xanthine: step 1/1. Converts the preformed base xanthine, a product of nucleic acid breakdown, to xanthosine 5'-monophosphate (XMP), so it can be reused for RNA or DNA synthesis. The chain is Xanthine phosphoribosyltransferase from Ruminiclostridium cellulolyticum (strain ATCC 35319 / DSM 5812 / JCM 6584 / H10) (Clostridium cellulolyticum).